A 309-amino-acid chain; its full sequence is SUR7 family protein FMP45 (309 aa).

Residues 1–5 (MIFKR) lie on the Cytoplasmic side of the membrane. Residues 6–26 (FVNLLVFLFLLGAGLLTFFLI) form a helical membrane-spanning segment. Topologically, residues 27–116 (LSGGRESGTL…YYLSRVGWAM (90 aa)) are extracellular. Residue asparagine 73 is glycosylated (N-linked (GlcNAc...) asparagine). The helical transmembrane segment at 117–137 (LLISLFFIVLALVPGFLATFL) threads the bilayer. At 138–140 (PFK) the chain is on the cytoplasmic side. Residues 141–161 (AVPVLYCVLSWLAFFFIILAA) form a helical membrane-spanning segment. Topologically, residues 162–188 (CLYTGCYVKARKTFRNSGRSARLGPKN) are extracellular. The chain crosses the membrane as a helical span at residues 189-209 (FAFIWTSVFLMLVNAIWSTIF). Over 210–309 (SATHKAHSTY…GLAGPVTVRD (100 aa)) the chain is Cytoplasmic. 2 positions are modified to phosphoserine: serine 230 and serine 232. Threonine 235 carries the phosphothreonine modification. The disordered stretch occupies residues 253–309 (GPITAAPVVGQPQPTTTTTPAGNGKFFQKLKTRKQVPSAELEPAGDGGLAGPVTVRD). Over residues 258–274 (APVVGQPQPTTTTTPAG) the composition is skewed to low complexity.

This sequence belongs to the SUR7 family.

Its subcellular location is the cell membrane. In terms of biological role, involved in sporulation and affects the sphingolipid composition of the plasma membrane. The sequence is that of SUR7 family protein FMP45 (FMP45) from Saccharomyces cerevisiae (strain ATCC 204508 / S288c) (Baker's yeast).